The chain runs to 391 residues: Somatostatin receptor type 1 (391 aa).

The interval 1–50 (MFPNGTAPSPTSSPSSSPGGCGEGVCSRGPGSGAADGMEEPGRNSSQNGT) is disordered. At 1-56 (MFPNGTAPSPTSSPSSSPGGCGEGVCSRGPGSGAADGMEEPGRNSSQNGTLSEGQG) the chain is on the extracellular side. N-linked (GlcNAc...) asparagine glycosylation is present at Asn4. Positions 8–18 (PSPTSSPSSSP) are enriched in low complexity. N-linked (GlcNAc...) asparagine glycosylation is found at Asn44 and Asn48. The chain crosses the membrane as a helical span at residues 57–84 (SAILISFIYSVVCLVGLCGNSMVIYVIL). Residues 85–94 (RYAKMKTATN) are Cytoplasmic-facing. Residues 95–120 (IYILNLAIADELLMLSVPFLVTSTLL) traverse the membrane as a helical segment. Over 121 to 131 (RHWPFGALLCR) the chain is Extracellular. Cys130 and Cys208 are oxidised to a cystine. Residues 132–153 (LVLSVDAVNMFTSIYCLTVLSV) traverse the membrane as a helical segment. At 154 to 175 (DRYVAVVHPIKAARYRRPTVAK) the chain is on the cytoplasmic side. A helical membrane pass occupies residues 176 to 196 (VVNLGVWVLSLLVILPIVVFS). The Extracellular portion of the chain corresponds to 197–219 (RTAANSDGTVACNMLMPEPAQRW). The helical transmembrane segment at 220–244 (LVGFVLYTFLMGFLLPVGAICLCYV) threads the bilayer. The Cytoplasmic portion of the chain corresponds to 245 to 270 (LIIAKMRMVALKAGWQQRKRSERKIT). The helical transmembrane segment at 271 to 296 (LMVMMVVMVFVICWMPFYVVQLVNVF) threads the bilayer. Topologically, residues 297-303 (AEQDDAT) are extracellular. The chain crosses the membrane as a helical span at residues 304-327 (VSQLSVILGYANSCANPILYGFLS). Over 328–391 (DNFKRSFQRI…GTCASRISTL (64 aa)) the chain is Cytoplasmic. Cys339 carries the S-palmitoyl cysteine lipid modification.

It belongs to the G-protein coupled receptor 1 family. In terms of tissue distribution, brain, pituitary, islet, jejunum, stomach, heart, spleen.

The protein resides in the cell membrane. In terms of biological role, receptor for somatostatin with higher affinity for somatostatin-14 than -28. This receptor is coupled to phosphotyrosine phosphatase and Na(+)/H(+) exchanger via pertussis toxin insensitive G proteins. This Rattus norvegicus (Rat) protein is Somatostatin receptor type 1 (Sstr1).